Consider the following 877-residue polypeptide: Alanine--tRNA ligase (877 aa).

The Zn(2+) site is built by H562, H566, C664, and H668.

The protein belongs to the class-II aminoacyl-tRNA synthetase family. Zn(2+) is required as a cofactor.

The protein localises to the cytoplasm. It catalyses the reaction tRNA(Ala) + L-alanine + ATP = L-alanyl-tRNA(Ala) + AMP + diphosphate. Functionally, catalyzes the attachment of alanine to tRNA(Ala) in a two-step reaction: alanine is first activated by ATP to form Ala-AMP and then transferred to the acceptor end of tRNA(Ala). Also edits incorrectly charged Ser-tRNA(Ala) and Gly-tRNA(Ala) via its editing domain. The protein is Alanine--tRNA ligase of Picosynechococcus sp. (strain ATCC 27264 / PCC 7002 / PR-6) (Agmenellum quadruplicatum).